A 238-amino-acid polypeptide reads, in one-letter code: Probable transcriptional regulatory protein YeeN (238 aa).

Belongs to the TACO1 family. YeeN subfamily.

It localises to the cytoplasm. The protein is Probable transcriptional regulatory protein YeeN of Shigella sonnei (strain Ss046).